Consider the following 373-residue polypeptide: Probable protein phosphatase 2C 73 (373 aa).

In terms of domain architecture, PPM-type phosphatase spans 61-354; the sequence is LASLFSKRGE…DDMSVVCLFL (294 aa). 4 residues coordinate Mn(2+): D97, G98, D299, and D345.

The protein belongs to the PP2C family. Mg(2+) serves as cofactor. Requires Mn(2+) as cofactor.

The catalysed reaction is O-phospho-L-seryl-[protein] + H2O = L-seryl-[protein] + phosphate. It carries out the reaction O-phospho-L-threonyl-[protein] + H2O = L-threonyl-[protein] + phosphate. This Arabidopsis thaliana (Mouse-ear cress) protein is Probable protein phosphatase 2C 73 (PPC6-7).